A 336-amino-acid chain; its full sequence is Ketol-acid reductoisomerase (NADP(+)) (336 aa).

The KARI N-terminal Rossmann domain maps to 3-183 (ATMYYDRDVS…GGTRAGVLET (181 aa)). NADP(+) contacts are provided by residues 26–29 (YGSQ), arginine 49, serine 52, serine 54, and 84–87 (DETQ). Histidine 109 is an active-site residue. Residue glycine 135 coordinates NADP(+). The KARI C-terminal knotted domain occupies 184–329 (TFKEETETDL…RELRSKMPFI (146 aa)). Mg(2+)-binding residues include aspartate 192, glutamate 196, glutamate 228, and glutamate 232. Serine 253 lines the substrate pocket.

Belongs to the ketol-acid reductoisomerase family. The cofactor is Mg(2+).

It carries out the reaction (2R)-2,3-dihydroxy-3-methylbutanoate + NADP(+) = (2S)-2-acetolactate + NADPH + H(+). The enzyme catalyses (2R,3R)-2,3-dihydroxy-3-methylpentanoate + NADP(+) = (S)-2-ethyl-2-hydroxy-3-oxobutanoate + NADPH + H(+). Its pathway is amino-acid biosynthesis; L-isoleucine biosynthesis; L-isoleucine from 2-oxobutanoate: step 2/4. The protein operates within amino-acid biosynthesis; L-valine biosynthesis; L-valine from pyruvate: step 2/4. Its function is as follows. Involved in the biosynthesis of branched-chain amino acids (BCAA). Catalyzes an alkyl-migration followed by a ketol-acid reduction of (S)-2-acetolactate (S2AL) to yield (R)-2,3-dihydroxy-isovalerate. In the isomerase reaction, S2AL is rearranged via a Mg-dependent methyl migration to produce 3-hydroxy-3-methyl-2-ketobutyrate (HMKB). In the reductase reaction, this 2-ketoacid undergoes a metal-dependent reduction by NADPH to yield (R)-2,3-dihydroxy-isovalerate. In Deinococcus geothermalis (strain DSM 11300 / CIP 105573 / AG-3a), this protein is Ketol-acid reductoisomerase (NADP(+)).